We begin with the raw amino-acid sequence, 298 residues long: Acetylglutamate kinase (298 aa).

Substrate-binding positions include 69-70 (GG), arginine 91, and asparagine 196.

This sequence belongs to the acetylglutamate kinase family. ArgB subfamily.

The protein resides in the cytoplasm. The catalysed reaction is N-acetyl-L-glutamate + ATP = N-acetyl-L-glutamyl 5-phosphate + ADP. It participates in amino-acid biosynthesis; L-arginine biosynthesis; N(2)-acetyl-L-ornithine from L-glutamate: step 2/4. Catalyzes the ATP-dependent phosphorylation of N-acetyl-L-glutamate. The protein is Acetylglutamate kinase of Nitrobacter winogradskyi (strain ATCC 25391 / DSM 10237 / CIP 104748 / NCIMB 11846 / Nb-255).